The chain runs to 375 residues: Acetylornithine aminotransferase (375 aa).

Residues glycine 93–threonine 94 and phenylalanine 120 each bind pyridoxal 5'-phosphate. A N(2)-acetyl-L-ornithine-binding site is contributed by arginine 123. Aspartate 205–glutamine 208 contacts pyridoxal 5'-phosphate. Lysine 234 is modified (N6-(pyridoxal phosphate)lysine). Threonine 262 serves as a coordination point for N(2)-acetyl-L-ornithine. Threonine 263 contacts pyridoxal 5'-phosphate.

The protein belongs to the class-III pyridoxal-phosphate-dependent aminotransferase family. ArgD subfamily. As to quaternary structure, homodimer. Pyridoxal 5'-phosphate is required as a cofactor.

The protein resides in the cytoplasm. It catalyses the reaction N(2)-acetyl-L-ornithine + 2-oxoglutarate = N-acetyl-L-glutamate 5-semialdehyde + L-glutamate. It functions in the pathway amino-acid biosynthesis; L-arginine biosynthesis; N(2)-acetyl-L-ornithine from L-glutamate: step 4/4. The polypeptide is Acetylornithine aminotransferase (Staphylococcus epidermidis (strain ATCC 12228 / FDA PCI 1200)).